The following is a 471-amino-acid chain: Probable ribonuclease FAU-1 (471 aa).

This sequence belongs to the FAU-1 family.

Functionally, probable RNase involved in rRNA stability through maturation and/or degradation of precursor rRNAs. Binds to RNA in loop regions with AU-rich sequences. This chain is Probable ribonuclease FAU-1, found in Aeropyrum pernix (strain ATCC 700893 / DSM 11879 / JCM 9820 / NBRC 100138 / K1).